The primary structure comprises 282 residues: Transcription factor BC1 (282 aa).

A disordered region spans residues 34-123 (TTAPAIPEDA…ATDSHSLAER (90 aa)). Polar residues predominate over residues 45–55 (METSSVVLDTS). The segment covering 75-84 (HSKEAKENGR) has biased composition (basic and acidic residues). The Nuclear localization signal motif lies at 109–116 (ARRGQATD). Residues 113–126 (QATDSHSLAERVRR) are basic motif; degenerate. The region spanning 113 to 163 (QATDSHSLAERVRRERISERMRMLQALVPGCDKVTGKALILDEIINYVQSL) is the bHLH domain. The segment at 127-163 (ERISERMRMLQALVPGCDKVTGKALILDEIINYVQSL) is helix-loop-helix motif. The segment at 219 to 251 (PAQSHAIMDTSNTSPTPYTLQVQGGSNNNSLSQ) is disordered.

The protein belongs to the bHLH protein family. As to quaternary structure, homodimer. Component of a nuclear cell elongation controlling complex made of ILI5/BUL1, LO9-177 and BC1. Interacts with ILI5/BUL1 only in the presence of LO9-177. Interacts with IBH1. Binds to LO9-177 in the nucleus. Interacts with BCL1. As to expression, preferentially present in anthers and leaves lamina joints. Expressed in seedlings, leaves sheaths, collars and panicles.

It is found in the nucleus. Functionally, transcription activator that contributes, together with LO9-177 and ILI5/BUL1, to the promotion of leaf inclination and grain size by modulating cell elongation. Involved in the RLI1-dependent modulation of leaf inclination by promoting lamina joint cell elongation, especially in response to phosphate (Pi) availability. The polypeptide is Transcription factor BC1 (Oryza sativa subsp. japonica (Rice)).